The following is a 370-amino-acid chain: uncharacterized protein (370 aa).

Lys207 is modified (N6-(pyridoxal phosphate)lysine).

The protein belongs to the class-V pyridoxal-phosphate-dependent aminotransferase family. It depends on pyridoxal 5'-phosphate as a cofactor.

This is an uncharacterized protein from Bacillus subtilis (strain 168).